Here is a 621-residue protein sequence, read N- to C-terminus: Kelch-like protein 6 (621 aa).

Positions 72–139 (TDVILCVDIQ…TYTSKALITK (68 aa)) constitute a BTB domain. One can recognise a BACK domain in the interval 174–276 (CVGILRLADT…DPWYFVETVE (103 aa)). 6 Kelch repeats span residues 320-367 (VFMI…NKKW), 378-421 (EVYI…VLGG), 422-468 (KVYV…SHKK), 470-516 (LYVI…SFRD), 517-558 (RIYV…PCNN), and 560-606 (LYIT…TIRK).

In terms of tissue distribution, found in germinal center B-cells.

Its function is as follows. Involved in B-lymphocyte antigen receptor signaling and germinal center formation. The protein is Kelch-like protein 6 (KLHL6) of Homo sapiens (Human).